A 585-amino-acid chain; its full sequence is Eukaryotic translation initiation factor 3 subunit D (585 aa).

The segment covering 43–60 has biased composition (basic and acidic residues); the sequence is LGRMADWTGDGKDRDRGG. Disordered regions lie at residues 43 to 62 and 109 to 152; these read LGRMADWTGDGKDRDRGGRQ and RGGG…NRSA. Residues 109-130 show a composition bias toward gly residues; that stretch reads RGGGTVFRGRGQRGVGQRGGRA. Positions 300–314 are RNA gate; it reads SIDLVTVNENAADAP. The tract at residues 560–585 is disordered; that stretch reads VPPNTFEEDDEAAEEQEEKAEEESEE. Positions 565–585 are enriched in acidic residues; sequence FEEDDEAAEEQEEKAEEESEE.

It belongs to the eIF-3 subunit D family. In terms of assembly, component of the eukaryotic translation initiation factor 3 (eIF-3) complex.

It is found in the cytoplasm. In terms of biological role, mRNA cap-binding component of the eukaryotic translation initiation factor 3 (eIF-3) complex, which is involved in protein synthesis of a specialized repertoire of mRNAs and, together with other initiation factors, stimulates binding of mRNA and methionyl-tRNAi to the 40S ribosome. The eIF-3 complex specifically targets and initiates translation of a subset of mRNAs involved in cell proliferation. In the eIF-3 complex, eif3d specifically recognizes and binds the 7-methylguanosine cap of a subset of mRNAs. The chain is Eukaryotic translation initiation factor 3 subunit D from Neosartorya fischeri (strain ATCC 1020 / DSM 3700 / CBS 544.65 / FGSC A1164 / JCM 1740 / NRRL 181 / WB 181) (Aspergillus fischerianus).